Here is a 489-residue protein sequence, read N- to C-terminus: MESMFSSPAEAALQRETGVPGLLTPLPDLDGVYELERVAGFVRDLGCERVALQFPDQLLGDAVAVAARLEETTGSKMFILGDTAYGSCCVDVLGAEQAGAQALIHFGPACLSPPARPLPVAFVLRQRSVALELCVKAFEAQNPDPKAPVVLLSEPACAHALEALATLLRPRYLDLLVSSPAFPQPVGSLSPEPMPLERFGRRFPLAPGRRLEEYGAFYVGGSKASPDPDLDPDLSRLLLGWAPGQPFSSCCPDTGKTQDEGARAGRLRARRRYLVERARDARVVGLLAGTLGVAQHREALAHLRNLTQAAGKRSYVLALGRPTPAKLANFPEVDVFVLLACPLGALAPQLSGSFFQPILAPCELEAACNPAWPPPGLAPHLTHYADLLPGSPFHVALPPPESELWETPDVSLITGDLRPPPAWKSSNDHGSLALTPRPQLELAESSPAASFLSSRSWQGLEPRLGQTPVTEAVSGRRGIAIAYEDEGSG.

The residue at position 1 (methionine 1) is an N-acetylmethionine. The residue at position 7 (serine 7) is a Phosphoserine. Residues cysteine 89, cysteine 110, and cysteine 341 each contribute to the [4Fe-4S] cluster site. Threonine 435 is subject to Phosphothreonine. Phosphoserine occurs at positions 446 and 456. Threonine 467 bears the Phosphothreonine mark. Residue serine 488 is modified to Phosphoserine.

The protein belongs to the DPH1/DPH2 family. DPH2 subfamily. Component of the 2-(3-amino-3-carboxypropyl)histidine synthase complex composed of DPH1, DPH2, DPH3 and a NADH-dependent reductase. Interacts with DPH1. [4Fe-4S] cluster is required as a cofactor. As to expression, strongly expressed in skeletal muscle. Moderately expressed in heart, small intestine, liver, pancreas, testis and colon. Weakly expressed in brain, placenta, kidney, spleen, thymus, prostate, ovary and lymphocytes.

It participates in protein modification; peptidyl-diphthamide biosynthesis. In terms of biological role, required for the first step of diphthamide biosynthesis, a post-translational modification of histidine which occurs in elongation factor 2. DPH1 and DPH2 transfer a 3-amino-3-carboxypropyl (ACP) group from S-adenosyl-L-methionine (SAM) to a histidine residue, the reaction is assisted by a reduction system comprising DPH3 and a NADH-dependent reductase. Facilitates the reduction of the catalytic iron-sulfur cluster found in the DPH1 subunit. The chain is 2-(3-amino-3-carboxypropyl)histidine synthase subunit 2 (DPH2) from Homo sapiens (Human).